A 787-amino-acid polypeptide reads, in one-letter code: Protein translocase subunit SecA (787 aa).

Residues Gln-85, 103 to 107, and Asp-492 contribute to the ATP site; that span reads GEGKT.

Belongs to the SecA family. As to quaternary structure, monomer and homodimer. Part of the essential Sec protein translocation apparatus which comprises SecA, SecYEG and auxiliary proteins SecDF. Other proteins may also be involved.

It localises to the cell membrane. Its subcellular location is the cytoplasm. It catalyses the reaction ATP + H2O + cellular proteinSide 1 = ADP + phosphate + cellular proteinSide 2.. Part of the Sec protein translocase complex. Interacts with the SecYEG preprotein conducting channel. Has a central role in coupling the hydrolysis of ATP to the transfer of proteins into and across the cell membrane, serving as an ATP-driven molecular motor driving the stepwise translocation of polypeptide chains across the membrane. This Latilactobacillus sakei subsp. sakei (strain 23K) (Lactobacillus sakei subsp. sakei) protein is Protein translocase subunit SecA.